Consider the following 91-residue polypeptide: MKKLVLLFALVLLAFQVQADSIQNTDEETKTEEQPGEKDQAVSVSFGDPQGSALQDAALGWGRRCPQCPRCPSCPSCPRCPRCPRCKCNPK.

The first 19 residues, 1–19, serve as a signal peptide directing secretion; sequence MKKLVLLFALVLLAFQVQA. Residues 20–58 constitute a propeptide that is removed on maturation; sequence DSIQNTDEETKTEEQPGEKDQAVSVSFGDPQGSALQDAA. The disordered stretch occupies residues 22 to 48; the sequence is IQNTDEETKTEEQPGEKDQAVSVSFGD. Residues 27 to 40 show a composition bias toward basic and acidic residues; sequence EETKTEEQPGEKDQ. Repeat copies occupy residues 65–67, 68–70, 71–73, 74–76, 77–79, 80–82, and 83–85. The 7 X 3 AA tandem repeats of C-P-X stretch occupies residues 65–85; it reads CPQCPRCPSCPSCPRCPRCPR.

Belongs to the alpha-defensin family. In terms of tissue distribution, small bowel, spleen, colon, kidney, liver, stomach and femur marrow.

The protein localises to the secreted. Apparent precursor of a secreted, cationic, proline- and cysteine-rich peptide that contains Cys-Pro-Xaa repeats. Unlike cryptdin, the proposed mature peptide region lacks the structural motif characteristic of defensins. It may have microbicidal activities. The chain is Alpha-defensin-related sequence 2 (Defa-rs2) from Mus musculus (Mouse).